The following is an 881-amino-acid chain: Alanine--tRNA ligase (881 aa).

A compositionally biased stretch (basic and acidic residues) spans 422–440; the sequence is FEDEMQKQKERARSARSTE. The disordered stretch occupies residues 422–445; the sequence is FEDEMQKQKERARSARSTEKSMGV. Positions 567, 571, 669, and 673 each coordinate Zn(2+).

The protein belongs to the class-II aminoacyl-tRNA synthetase family. Zn(2+) is required as a cofactor.

Its subcellular location is the cytoplasm. It carries out the reaction tRNA(Ala) + L-alanine + ATP = L-alanyl-tRNA(Ala) + AMP + diphosphate. Its function is as follows. Catalyzes the attachment of alanine to tRNA(Ala) in a two-step reaction: alanine is first activated by ATP to form Ala-AMP and then transferred to the acceptor end of tRNA(Ala). Also edits incorrectly charged Ser-tRNA(Ala) and Gly-tRNA(Ala) via its editing domain. This is Alanine--tRNA ligase from Pediococcus pentosaceus (strain ATCC 25745 / CCUG 21536 / LMG 10740 / 183-1w).